A 436-amino-acid polypeptide reads, in one-letter code: Serine--tRNA ligase (436 aa).

L-serine is bound at residue 241–243 (TSE). 272–274 (RAE) is a binding site for ATP. Glu295 lines the L-serine pocket. 359–362 (EISS) provides a ligand contact to ATP. Ser395 is an L-serine binding site.

It belongs to the class-II aminoacyl-tRNA synthetase family. Type-1 seryl-tRNA synthetase subfamily. Homodimer. The tRNA molecule binds across the dimer.

Its subcellular location is the cytoplasm. It carries out the reaction tRNA(Ser) + L-serine + ATP = L-seryl-tRNA(Ser) + AMP + diphosphate + H(+). The enzyme catalyses tRNA(Sec) + L-serine + ATP = L-seryl-tRNA(Sec) + AMP + diphosphate + H(+). The protein operates within aminoacyl-tRNA biosynthesis; selenocysteinyl-tRNA(Sec) biosynthesis; L-seryl-tRNA(Sec) from L-serine and tRNA(Sec): step 1/1. In terms of biological role, catalyzes the attachment of serine to tRNA(Ser). Is also able to aminoacylate tRNA(Sec) with serine, to form the misacylated tRNA L-seryl-tRNA(Sec), which will be further converted into selenocysteinyl-tRNA(Sec). The chain is Serine--tRNA ligase from Beijerinckia indica subsp. indica (strain ATCC 9039 / DSM 1715 / NCIMB 8712).